A 280-amino-acid chain; its full sequence is Protease HtpX (280 aa).

The next 2 helical transmembrane spans lie at Thr-7 to Gly-26 and Gly-30 to Ser-49. A Zn(2+)-binding site is contributed by His-129. The active site involves Glu-130. His-133 lines the Zn(2+) pocket. 2 helical membrane passes run Ala-146–Gly-166 and Val-178–Ile-198. Glu-203 provides a ligand contact to Zn(2+).

The protein belongs to the peptidase M48B family. It depends on Zn(2+) as a cofactor.

It localises to the cell inner membrane. In Legionella pneumophila (strain Lens), this protein is Protease HtpX.